A 682-amino-acid polypeptide reads, in one-letter code: Transcription activator of gluconeogenesis PODANS_4_8760 (682 aa).

Residues 1-72 (MPEDGGPFGS…KDPLRPRRKK (72 aa)) are disordered. The span at 9-21 (GSEAAEASGAMSE) shows a compositional bias: low complexity. Basic and acidic residues-rich tracts occupy residues 29 to 41 (HEPH…DRMS) and 54 to 67 (GEVK…DPLR). Residues 77–105 (CYACQRAHLTCGDERPCQRCIKRGLQDSC) constitute a DNA-binding region (zn(2)-C6 fungal-type). 5 disordered regions span residues 122–148 (EALR…RHHS), 181–211 (LTES…SGMV), 325–375 (PAGP…RPSK), 509–541 (NRNT…AASG), and 586–622 (TDKP…HSIL). Polar residues-rich tracts occupy residues 185 to 206 (LPFN…SNPP), 329 to 345 (TSLQ…QPTT), and 354 to 373 (PTMS…NSRP).

The protein belongs to the ERT1/acuK family.

Its subcellular location is the nucleus. Its function is as follows. Transcription factor which regulates nonfermentable carbon utilization. Activator of gluconeogenetic genes. The chain is Transcription activator of gluconeogenesis PODANS_4_8760 from Podospora anserina (strain S / ATCC MYA-4624 / DSM 980 / FGSC 10383) (Pleurage anserina).